The following is a 231-amino-acid chain: MSKLTKKQKKIAEVIKPNQLYTVADAVAILKQFASKKFRESLDISINLGVDPRKSDQVVRSSTNLPKGTGKTVRVAVFAQGDNAAKATAAGADIVGFEDLADKIKAGEMNFDVVIATPDAMRIVGQLGQILGPRGLMPNPKVGTVTTNVEAAVNDAKSGQVRYRTDKNGIIHCTVGKADFAPEDVLENVVALINDLKKAKPASSKGQYLKKISLSTTMGPGLPIDISSIPV.

Belongs to the universal ribosomal protein uL1 family. In terms of assembly, part of the 50S ribosomal subunit.

Binds directly to 23S rRNA. The L1 stalk is quite mobile in the ribosome, and is involved in E site tRNA release. Its function is as follows. Protein L1 is also a translational repressor protein, it controls the translation of the L11 operon by binding to its mRNA. The protein is Large ribosomal subunit protein uL1 of Legionella pneumophila (strain Paris).